A 101-amino-acid chain; its full sequence is DNA-binding protein Fis (101 aa).

The H-T-H motif DNA-binding region spans 77–96 (QTRAANMLGINRGTLRKKLK).

The protein belongs to the transcriptional regulatory Fis family. As to quaternary structure, homodimer.

In terms of biological role, activates ribosomal RNA transcription. Plays a direct role in upstream activation of rRNA promoters. This Shewanella denitrificans (strain OS217 / ATCC BAA-1090 / DSM 15013) protein is DNA-binding protein Fis.